Here is a 1096-residue protein sequence, read N- to C-terminus: Carbamoyl phosphate synthase large chain (1096 aa).

The carboxyphosphate synthetic domain stretch occupies residues 1-402; it reads MPKRDDINSV…ALQKALRSLE (402 aa). Arginine 129, arginine 169, glycine 175, glycine 176, glutamate 208, isoleucine 210, glutamate 215, glycine 241, valine 242, histidine 243, glutamine 285, and glutamate 299 together coordinate ATP. The 196-residue stretch at 133 to 328 folds into the ATP-grasp 1 domain; that stretch reads KDLVIESGAD…IAKIAAKLAI (196 aa). Positions 285, 299, and 301 each coordinate Mg(2+). Mn(2+) is bound by residues glutamine 285, glutamate 299, and asparagine 301. The interval 403–547 is oligomerization domain; the sequence is KRGSSFHWGA…YSSYDSETEI (145 aa). The interval 548-950 is carbamoyl phosphate synthetic domain; the sequence is VPSDRRKVII…AFAKSQEAAF (403 aa). The region spanning 676–870 is the ATP-grasp 2 domain; that stretch reads SGILDAAGLV…LAKAASLVMV (195 aa). Residues arginine 712, arginine 754, leucine 756, glutamate 761, glycine 786, isoleucine 787, histidine 788, serine 789, glutamine 829, and glutamate 841 each coordinate ATP. The Mg(2+) site is built by glutamine 829, glutamate 841, and asparagine 843. Glutamine 829, glutamate 841, and asparagine 843 together coordinate Mn(2+). The region spanning 951 to 1095 is the MGS-like domain; that stretch reads GGLPLSGTVF…QDYAIAREAR (145 aa). Residues 951-1096 form an allosteric domain region; sequence GGLPLSGTVF…DYAIAREARR (146 aa).

The protein belongs to the CarB family. As to quaternary structure, composed of two chains; the small (or glutamine) chain promotes the hydrolysis of glutamine to ammonia, which is used by the large (or ammonia) chain to synthesize carbamoyl phosphate. Tetramer of heterodimers (alpha,beta)4. Mg(2+) serves as cofactor. Requires Mn(2+) as cofactor.

It carries out the reaction hydrogencarbonate + L-glutamine + 2 ATP + H2O = carbamoyl phosphate + L-glutamate + 2 ADP + phosphate + 2 H(+). The catalysed reaction is hydrogencarbonate + NH4(+) + 2 ATP = carbamoyl phosphate + 2 ADP + phosphate + 2 H(+). Its pathway is amino-acid biosynthesis; L-arginine biosynthesis; carbamoyl phosphate from bicarbonate: step 1/1. It participates in pyrimidine metabolism; UMP biosynthesis via de novo pathway; (S)-dihydroorotate from bicarbonate: step 1/3. Its function is as follows. Large subunit of the glutamine-dependent carbamoyl phosphate synthetase (CPSase). CPSase catalyzes the formation of carbamoyl phosphate from the ammonia moiety of glutamine, carbonate, and phosphate donated by ATP, constituting the first step of 2 biosynthetic pathways, one leading to arginine and/or urea and the other to pyrimidine nucleotides. The large subunit (synthetase) binds the substrates ammonia (free or transferred from glutamine from the small subunit), hydrogencarbonate and ATP and carries out an ATP-coupled ligase reaction, activating hydrogencarbonate by forming carboxy phosphate which reacts with ammonia to form carbamoyl phosphate. The sequence is that of Carbamoyl phosphate synthase large chain from Clavibacter sepedonicus (Clavibacter michiganensis subsp. sepedonicus).